The primary structure comprises 505 residues: Ion-translocating oxidoreductase complex subunit C (505 aa).

4Fe-4S ferredoxin-type domains lie at 381-410 (ELNN…EQLY) and 420-449 (KTQI…MSYY). Positions 390, 393, 396, 400, 429, 432, 435, and 439 each coordinate [4Fe-4S] cluster.

The protein belongs to the 4Fe4S bacterial-type ferredoxin family. RnfC subfamily. In terms of assembly, the complex is composed of six subunits: RnfA, RnfB, RnfC, RnfD, RnfE and RnfG. The cofactor is [4Fe-4S] cluster.

The protein localises to the cell inner membrane. Functionally, part of a membrane-bound complex that couples electron transfer with translocation of ions across the membrane. The chain is Ion-translocating oxidoreductase complex subunit C from Buchnera aphidicola subsp. Baizongia pistaciae (strain Bp).